The following is a 38-amino-acid chain: MTNPNPNKQTVELNRTSLYWGLLLIFVLAVLFSSYIFN.

A helical transmembrane segment spans residues 17 to 37 (SLYWGLLLIFVLAVLFSSYIF).

Belongs to the PsbL family. As to quaternary structure, PSII is composed of 1 copy each of membrane proteins PsbA, PsbB, PsbC, PsbD, PsbE, PsbF, PsbH, PsbI, PsbJ, PsbK, PsbL, PsbM, PsbT, PsbX, PsbY, PsbZ, Psb30/Ycf12, at least 3 peripheral proteins of the oxygen-evolving complex and a large number of cofactors. It forms dimeric complexes.

Its subcellular location is the plastid. The protein localises to the chloroplast thylakoid membrane. Functionally, one of the components of the core complex of photosystem II (PSII). PSII is a light-driven water:plastoquinone oxidoreductase that uses light energy to abstract electrons from H(2)O, generating O(2) and a proton gradient subsequently used for ATP formation. It consists of a core antenna complex that captures photons, and an electron transfer chain that converts photonic excitation into a charge separation. This subunit is found at the monomer-monomer interface and is required for correct PSII assembly and/or dimerization. This Ostreococcus tauri protein is Photosystem II reaction center protein L.